A 45-amino-acid polypeptide reads, in one-letter code: DNA replication protein repEB (45 aa).

Its function is as follows. Involved in T4 DNA replication. Important for the priming of leading strand DNA synthesis at oriE. Binds to ssDNA. The sequence is that of DNA replication protein repEB (repEB) from Enterobacteria phage T4 (Bacteriophage T4).